Reading from the N-terminus, the 402-residue chain is DNA polymerase IV (402 aa).

A UmuC domain is found at 5–187 (ILLADMNSFY…LPVRELFGVG (183 aa)). Residues D9 and D105 each coordinate Mg(2+). E106 is a catalytic residue.

Belongs to the DNA polymerase type-Y family. As to quaternary structure, monomer. Requires Mg(2+) as cofactor.

It localises to the cytoplasm. The catalysed reaction is DNA(n) + a 2'-deoxyribonucleoside 5'-triphosphate = DNA(n+1) + diphosphate. In terms of biological role, poorly processive, error-prone DNA polymerase involved in untargeted mutagenesis. Copies undamaged DNA at stalled replication forks, which arise in vivo from mismatched or misaligned primer ends. These misaligned primers can be extended by PolIV. Exhibits no 3'-5' exonuclease (proofreading) activity. May be involved in translesional synthesis, in conjunction with the beta clamp from PolIII. The polypeptide is DNA polymerase IV (Pelotomaculum thermopropionicum (strain DSM 13744 / JCM 10971 / SI)).